Consider the following 460-residue polypeptide: Ribulose bisphosphate carboxylase (460 aa).

Asparagine 112 contacts substrate. Residue lysine 167 is the Proton acceptor of the active site. Lysine 169 contacts substrate. Positions 192, 194, and 195 each coordinate Mg(2+). The residue at position 192 (lysine 192) is an N6-carboxylysine. Residue histidine 288 is the Proton acceptor of the active site. The substrate site is built by arginine 289, histidine 322, and serine 369.

This sequence belongs to the RuBisCO large chain family. Type II subfamily. In terms of assembly, homodimer. It depends on Mg(2+) as a cofactor.

The catalysed reaction is 2 (2R)-3-phosphoglycerate + 2 H(+) = D-ribulose 1,5-bisphosphate + CO2 + H2O. The enzyme catalyses D-ribulose 1,5-bisphosphate + O2 = 2-phosphoglycolate + (2R)-3-phosphoglycerate + 2 H(+). Its function is as follows. RuBisCO catalyzes two reactions: the carboxylation of D-ribulose 1,5-bisphosphate, the primary event in carbon dioxide fixation, as well as the oxidative fragmentation of the pentose substrate. Both reactions occur simultaneously and in competition at the same active site. The protein is Ribulose bisphosphate carboxylase of Rhodopseudomonas palustris (strain BisA53).